The primary structure comprises 123 residues: Small ribosomal subunit protein bS16 (123 aa).

The interval 87–123 (VKNNPVKAKPGKRAQERAAEKAQKVADAAAAAADAAE) is disordered. Over residues 99–110 (RAQERAAEKAQK) the composition is skewed to basic and acidic residues. Over residues 111-123 (VADAAAAAADAAE) the composition is skewed to low complexity.

This sequence belongs to the bacterial ribosomal protein bS16 family.

This is Small ribosomal subunit protein bS16 from Rhizobium johnstonii (strain DSM 114642 / LMG 32736 / 3841) (Rhizobium leguminosarum bv. viciae).